We begin with the raw amino-acid sequence, 149 residues long: Calmodulin-like protein (149 aa).

EF-hand domains follow at residues 6–41, 42–76, 78–113, and 113–148; these read TTQA…VGSN, PTQQ…KMKY, DSEA…IGEK, and KLTK…SKSF. Residues Asp-19, Asp-21, Asp-23, Lys-25, and Glu-30 each coordinate Ca(2+).

Belongs to the calmodulin family.

It localises to the contractile vacuole. Functionally, mediates the control of a large number of enzymes, ion channels and other proteins by Ca(2+) ions. Among the enzymes to be stimulated by the calmodulin-Ca(2+) complex are a number of protein kinases and phosphatases. The chain is Calmodulin-like protein (calB) from Dictyostelium discoideum (Social amoeba).